Consider the following 489-residue polypeptide: Protein nucleotidyltransferase YdiU (489 aa).

ATP contacts are provided by glycine 88, glycine 90, arginine 91, lysine 111, aspartate 123, glycine 124, arginine 174, and arginine 181. Residue aspartate 250 is the Proton acceptor of the active site. Mg(2+)-binding residues include asparagine 251 and aspartate 260. Aspartate 260 lines the ATP pocket.

Belongs to the SELO family. Mg(2+) is required as a cofactor. Mn(2+) serves as cofactor.

The enzyme catalyses L-seryl-[protein] + ATP = 3-O-(5'-adenylyl)-L-seryl-[protein] + diphosphate. It catalyses the reaction L-threonyl-[protein] + ATP = 3-O-(5'-adenylyl)-L-threonyl-[protein] + diphosphate. It carries out the reaction L-tyrosyl-[protein] + ATP = O-(5'-adenylyl)-L-tyrosyl-[protein] + diphosphate. The catalysed reaction is L-histidyl-[protein] + UTP = N(tele)-(5'-uridylyl)-L-histidyl-[protein] + diphosphate. The enzyme catalyses L-seryl-[protein] + UTP = O-(5'-uridylyl)-L-seryl-[protein] + diphosphate. It catalyses the reaction L-tyrosyl-[protein] + UTP = O-(5'-uridylyl)-L-tyrosyl-[protein] + diphosphate. Nucleotidyltransferase involved in the post-translational modification of proteins. It can catalyze the addition of adenosine monophosphate (AMP) or uridine monophosphate (UMP) to a protein, resulting in modifications known as AMPylation and UMPylation. The chain is Protein nucleotidyltransferase YdiU from Vibrio parahaemolyticus serotype O3:K6 (strain RIMD 2210633).